The chain runs to 419 residues: Murein hydrolase activator EnvC (419 aa).

A signal peptide spans 1–34 (MTRAVKPRRFAIRPIIYASVLSAGVLLCAFSAHA). Coiled-coil stretches lie at residues 35 to 124 (DERD…LDAA) and 155 to 271 (LNQA…ATRK). The segment covering 252–270 (EREAREAQAVRDRQKEATR) has biased composition (basic and acidic residues). The interval 252–290 (EREAREAQAVRDRQKEATRKGTTYKPTESEKSLMSRTGG) is disordered.

This sequence belongs to the peptidase M23B family.

It is found in the periplasm. Its function is as follows. Activator of the cell wall hydrolases AmiA and AmiB. Required for septal murein cleavage and daughter cell separation during cell division. In vitro, exhibits weak endoproteolytic activity on beta-casein. The chain is Murein hydrolase activator EnvC (envC) from Escherichia coli (strain K12).